We begin with the raw amino-acid sequence, 292 residues long: UDP-3-O-acyl-N-acetylglucosamine deacetylase (292 aa).

Zn(2+)-binding residues include His-75, His-231, and Asp-235. His-258 acts as the Proton donor in catalysis.

Belongs to the LpxC family. Zn(2+) is required as a cofactor.

The catalysed reaction is a UDP-3-O-[(3R)-3-hydroxyacyl]-N-acetyl-alpha-D-glucosamine + H2O = a UDP-3-O-[(3R)-3-hydroxyacyl]-alpha-D-glucosamine + acetate. It functions in the pathway glycolipid biosynthesis; lipid IV(A) biosynthesis; lipid IV(A) from (3R)-3-hydroxytetradecanoyl-[acyl-carrier-protein] and UDP-N-acetyl-alpha-D-glucosamine: step 2/6. In terms of biological role, catalyzes the hydrolysis of UDP-3-O-myristoyl-N-acetylglucosamine to form UDP-3-O-myristoylglucosamine and acetate, the committed step in lipid A biosynthesis. This chain is UDP-3-O-acyl-N-acetylglucosamine deacetylase, found in Nautilia profundicola (strain ATCC BAA-1463 / DSM 18972 / AmH).